The chain runs to 535 residues: GMP synthase [glutamine-hydrolyzing] (535 aa).

One can recognise a Glutamine amidotransferase type-1 domain in the interval 24-217; it reads KILIVDFGSQ…VRKVAGLTGD (194 aa). Cys101 acts as the Nucleophile in catalysis. Active-site residues include His191 and Glu193. The region spanning 218 to 410 is the GMPS ATP-PPase domain; it reads WTMRAFREEA…LGLPEIFVGR (193 aa). 245–251 serves as a coordination point for ATP; sequence SGGVDSS.

In terms of assembly, homodimer.

The enzyme catalyses XMP + L-glutamine + ATP + H2O = GMP + L-glutamate + AMP + diphosphate + 2 H(+). Its pathway is purine metabolism; GMP biosynthesis; GMP from XMP (L-Gln route): step 1/1. In terms of biological role, catalyzes the synthesis of GMP from XMP. The chain is GMP synthase [glutamine-hydrolyzing] from Nitrobacter winogradskyi (strain ATCC 25391 / DSM 10237 / CIP 104748 / NCIMB 11846 / Nb-255).